A 339-amino-acid chain; its full sequence is MRIAVDGMGGDHSPSAVVEGCVQALEEFKDIEIYITGPEDLLKEAFSKFKYDKERVIFIDAKEVISTNEHPAMAVKKKKDSSLVKALRLVKDNQCEAVISAGSTGAFLTGCTLIVGRIKGVERPALAPVMPGKNGPFMIIDAGANVDSKPSYLVQFAKMGEVYFKSVMDVNNPKVGLVNIGEEEEKGNDLTKATYKLLKEEKDINFIGNVEPREVSTGDVDVLVCDGFVGNTVLKMYEGVASTILSMIKSEVKSSFLAKLGVPFLAPALMNLKKKMDYKEYGGAPFLGVKGICVKAHGSSDAKAFKNAIRQARKFHENDLIGKLSEEITKKSFDNQKKF.

It belongs to the PlsX family. Homodimer. Probably interacts with PlsY.

It is found in the cytoplasm. It carries out the reaction a fatty acyl-[ACP] + phosphate = an acyl phosphate + holo-[ACP]. The protein operates within lipid metabolism; phospholipid metabolism. Catalyzes the reversible formation of acyl-phosphate (acyl-PO(4)) from acyl-[acyl-carrier-protein] (acyl-ACP). This enzyme utilizes acyl-ACP as fatty acyl donor, but not acyl-CoA. The protein is Phosphate acyltransferase of Clostridium perfringens (strain SM101 / Type A).